The following is a 550-amino-acid chain: Lariat debranching enzyme (550 aa).

2 residues coordinate a divalent metal cation: C8 and H10. S28 is subject to Phosphoserine. Residues D39 and N84 each coordinate a divalent metal cation. A lariat recognition loop region spans residues S124–R154. An N6-acetyllysine modification is found at K128. Residues H174, H226, and H228 each contribute to the a divalent metal cation site. The segment at E390–E550 is disordered. The segment covering N416 to N426 has biased composition (polar residues). Positions I430–A445 are enriched in acidic residues. Polar residues predominate over residues S450 to V483. S470, S480, S484, S485, S489, S491, S494, S505, and S520 each carry phosphoserine. The segment covering K498 to R528 has biased composition (basic and acidic residues).

The protein belongs to the lariat debranching enzyme family. Requires Fe(2+) as cofactor. The cofactor is Zn(2+). It depends on Mn(2+) as a cofactor.

Its subcellular location is the nucleus. Its activity is regulated as follows. Active in presence of diverse metals including Fe(2+), Zn(2+), Mn(2+). Also activated by Ca(2+). Binds two metal cations in two adjacent alpha and beta metal-binding pockets. Its function is as follows. Cleaves the 2'-5' phosphodiester linkage at the branch point of excised lariat intron RNA and converts them into linear molecules that can be subsequently degraded, thereby facilitating ribonucleotide turnover. Linked to its role in pre-mRNA processing mechanism, may also participate in retrovirus replication and have an antiviral cell-intrinsic defense function. The chain is Lariat debranching enzyme (Dbr1) from Mus musculus (Mouse).